The primary structure comprises 212 residues: RNA chaperone ProQ (212 aa).

Composition is skewed to basic and acidic residues over residues 102 to 124 and 132 to 144; these read ALKESKERVFASRRTNTKEEKAK and RKADAAAKSDKPK. Residues 102 to 149 form a disordered region; sequence ALKESKERVFASRRTNTKEEKAKQPRRPAPRKADAAAKSDKPKAAPKA.

It belongs to the ProQ family.

The protein localises to the cytoplasm. RNA chaperone with significant RNA binding, RNA strand exchange and RNA duplexing activities. In Aeromonas hydrophila subsp. hydrophila (strain ATCC 7966 / DSM 30187 / BCRC 13018 / CCUG 14551 / JCM 1027 / KCTC 2358 / NCIMB 9240 / NCTC 8049), this protein is RNA chaperone ProQ.